The sequence spans 303 residues: Eukaryotic translation initiation factor 3 subunit G (303 aa).

Residues 1-38 (MATQTKHDWADDEDLEETTTTTAPTTDLPPPQKIQNKD) form a disordered region. Positions 223–301 (ATLRVTNVSE…LILRVEFAKK (79 aa)) constitute an RRM domain.

This sequence belongs to the eIF-3 subunit G family. Component of the eukaryotic translation initiation factor 3 (eIF-3) complex.

Its subcellular location is the cytoplasm. Its function is as follows. RNA-binding component of the eukaryotic translation initiation factor 3 (eIF-3) complex, which is involved in protein synthesis of a specialized repertoire of mRNAs and, together with other initiation factors, stimulates binding of mRNA and methionyl-tRNAi to the 40S ribosome. The eIF-3 complex specifically targets and initiates translation of a subset of mRNAs involved in cell proliferation. This subunit can bind 18S rRNA. The protein is Eukaryotic translation initiation factor 3 subunit G of Chaetomium globosum (strain ATCC 6205 / CBS 148.51 / DSM 1962 / NBRC 6347 / NRRL 1970) (Soil fungus).